Consider the following 313-residue polypeptide: Olfactory receptor 2B6 (313 aa).

Topologically, residues 1 to 27 are extracellular; it reads MSWANESITGEFVLLGFSDQPWLEFPL. Asn5 carries N-linked (GlcNAc...) asparagine glycosylation. Residues 28-48 form a helical membrane-spanning segment; the sequence is FVVFLTSYIVTIFGNLNIILV. The Cytoplasmic segment spans residues 49 to 57; the sequence is SHLDPKLHT. The helical transmembrane segment at 58-78 threads the bilayer; it reads PMYFFLTNLSVIDLCYITCTV. Residues 79–97 lie on the Extracellular side of the membrane; the sequence is PQMLVNLRSIRKVISFGGC. An intrachain disulfide couples Cys97 to Cys189. The chain crosses the membrane as a helical span at residues 98–118; it reads VVQLFMFLALGATECVLLPVM. Over 119–143 the chain is Cytoplasmic; it reads SFDRFVAICRPLHYSVIMHQRLCLQ. The helical transmembrane segment at 144 to 164 threads the bilayer; the sequence is LAAVSWIIGFGNSVWLSILTL. Topologically, residues 165–200 are extracellular; that stretch reads QLPRCGHYVIDHFLCEVPALLKLSCVDVTANEAELF. The helical transmembrane segment at 201 to 221 threads the bilayer; sequence FVSVFFHLTPLSLILTSYAFI. Residues 222-244 lie on the Cytoplasmic side of the membrane; sequence ARAILKIQSAEGRQKAFGTCSSH. The helical transmembrane segment at 245-265 threads the bilayer; sequence LIVVSLFYGTALSVYFLPPSP. At 266–271 the chain is on the extracellular side; that stretch reads HSKNRR. The chain crosses the membrane as a helical span at residues 272 to 292; it reads KMVPLFYGIIAPMLNPLIYTL. At 293–313 the chain is on the cytoplasmic side; that stretch reads RNKEVKDAFKRLIKRVFLSKN.

It belongs to the G-protein coupled receptor 1 family.

The protein resides in the cell membrane. Functionally, odorant receptor. In Mus musculus (Mouse), this protein is Olfactory receptor 2B6.